A 59-amino-acid chain; its full sequence is Potassium channel toxin alpha-KTx 16.4 (59 aa).

A signal peptide spans 1 to 22; sequence MKILSIVLIALIICSISICTEA. Intrachain disulfides connect Cys-30-Cys-51, Cys-36-Cys-56, and Cys-40-Cys-58.

The protein belongs to the short scorpion toxin superfamily. Potassium channel inhibitor family. Alpha-KTx 16 subfamily. In terms of tissue distribution, expressed by the venom gland.

It localises to the secreted. Functionally, weak inhibitor of voltage-gated potassium channel hKv1.3/KCNA3. The chain is Potassium channel toxin alpha-KTx 16.4 from Mesobuthus eupeus (Lesser Asian scorpion).